The following is a 140-amino-acid chain: Lysozyme D (140 aa).

Residues 1 to 18 form the signal peptide; sequence MKAFIVLVALACAAPAFG. Residues 19–140 enclose the C-type lysozyme domain; that stretch reads RTMDRCSLAR…GWLPSIDDCF (122 aa). Disulfide bonds link Cys-24–Cys-139, Cys-45–Cys-129, Cys-80–Cys-96, and Cys-92–Cys-110. Active-site residues include Glu-50 and Asp-68.

The protein belongs to the glycosyl hydrolase 22 family. As to expression, found in the midgut.

It carries out the reaction Hydrolysis of (1-&gt;4)-beta-linkages between N-acetylmuramic acid and N-acetyl-D-glucosamine residues in a peptidoglycan and between N-acetyl-D-glucosamine residues in chitodextrins.. In terms of biological role, unlikely to play an active role in the humoral immune defense. May have a function in the digestion of bacteria in the food. This Drosophila melanogaster (Fruit fly) protein is Lysozyme D (LysD).